The primary structure comprises 150 residues: MAGQNRNKDFLIVSKDILPEAILKTAQAKELLVKGDANTINEAVDRVQLSRSAFYKYKDGVFPFYEASREKIITFSLTLENTAGVLSNVLNTIARFKANVLTINQGIPLQGIANVTISVENMGMVDIPENLLSALGEIDGVRKIEVIGQN.

An ACT domain is found at 74–149 (TFSLTLENTA…GVRKIEVIGQ (76 aa)).

Belongs to the UPF0735 family.

The polypeptide is UPF0735 ACT domain-containing protein DSY2247 (Desulfitobacterium hafniense (strain Y51)).